Consider the following 201-residue polypeptide: Prostamide/prostaglandin F synthase (201 aa).

Belongs to the peroxiredoxin-like PRXL2 family. Prostamide/prostaglandin F synthase subfamily.

It is found in the cytoplasm. Its subcellular location is the cytosol. It carries out the reaction prostaglandin H2 + [thioredoxin]-dithiol = prostaglandin F2alpha + [thioredoxin]-disulfide. It catalyses the reaction prostamide F2alpha + [thioredoxin]-disulfide = prostamide H2 + [thioredoxin]-dithiol. Catalyzes the reduction of prostaglandin-ethanolamide H(2) (prostamide H(2)) to prostamide F(2alpha) with NADPH as proton donor. Also able to reduce prostaglandin H(2) to prostaglandin F(2alpha). The chain is Prostamide/prostaglandin F synthase (prxl2b) from Xenopus tropicalis (Western clawed frog).